The chain runs to 76 residues: U-scoloptoxin(13)-Sa1a (76 aa).

A signal peptide spans 1-22 (MAYIFALIFAFVVCINTDVIQA).

It belongs to the scoloptoxin-13 family. Post-translationally, contains 4 disulfide bonds. In terms of tissue distribution, expressed by the venom gland.

The protein localises to the secreted. The protein is U-scoloptoxin(13)-Sa1a of Scolopendra alternans (Florida Keys giant centipede).